The chain runs to 446 residues: Phosphoglucosamine mutase (446 aa).

The Phosphoserine intermediate role is filled by Ser-103. Residues Ser-103, Asp-242, Asp-244, and Asp-246 each contribute to the Mg(2+) site. Phosphoserine is present on Ser-103.

Belongs to the phosphohexose mutase family. Mg(2+) is required as a cofactor. In terms of processing, activated by phosphorylation.

It catalyses the reaction alpha-D-glucosamine 1-phosphate = D-glucosamine 6-phosphate. In terms of biological role, catalyzes the conversion of glucosamine-6-phosphate to glucosamine-1-phosphate. This Vibrio cholerae serotype O1 (strain ATCC 39315 / El Tor Inaba N16961) protein is Phosphoglucosamine mutase.